The following is a 116-amino-acid chain: Probable prefoldin subunit 2 (116 aa).

This sequence belongs to the prefoldin subunit beta family. As to quaternary structure, heterohexamer of two PFD-alpha type and four PFD-beta type subunits.

Its function is as follows. Binds specifically to cytosolic chaperonin (c-CPN) and transfers target proteins to it. Binds to nascent polypeptide chain and promotes folding in an environment in which there are many competing pathways for nonnative proteins. The sequence is that of Probable prefoldin subunit 2 (pfdn2) from Dictyostelium discoideum (Social amoeba).